A 37-amino-acid polypeptide reads, in one-letter code: Large ribosomal subunit protein bL36 (37 aa).

Belongs to the bacterial ribosomal protein bL36 family.

The protein is Large ribosomal subunit protein bL36 of Geobacter metallireducens (strain ATCC 53774 / DSM 7210 / GS-15).